Here is a 375-residue protein sequence, read N- to C-terminus: Chaperone protein DnaJ (375 aa).

The region spanning 5–70 (DYYEVLGVNR…QKKGAYDRYG (66 aa)) is the J domain. The CR-type zinc finger occupies 134–212 (GAEKTIRIPT…CGGAGRVKKQ (79 aa)). Zn(2+) is bound by residues Cys-147, Cys-150, Cys-164, Cys-167, Cys-186, Cys-189, Cys-200, and Cys-203. 4 CXXCXGXG motif repeats span residues 147 to 154 (CGTCHGSG), 164 to 171 (CPTCGGAG), 186 to 193 (CPKCHGTG), and 200 to 207 (CGDCGGAG).

The protein belongs to the DnaJ family. As to quaternary structure, homodimer. It depends on Zn(2+) as a cofactor.

It is found in the cytoplasm. Participates actively in the response to hyperosmotic and heat shock by preventing the aggregation of stress-denatured proteins and by disaggregating proteins, also in an autonomous, DnaK-independent fashion. Unfolded proteins bind initially to DnaJ; upon interaction with the DnaJ-bound protein, DnaK hydrolyzes its bound ATP, resulting in the formation of a stable complex. GrpE releases ADP from DnaK; ATP binding to DnaK triggers the release of the substrate protein, thus completing the reaction cycle. Several rounds of ATP-dependent interactions between DnaJ, DnaK and GrpE are required for fully efficient folding. Also involved, together with DnaK and GrpE, in the DNA replication of plasmids through activation of initiation proteins. The protein is Chaperone protein DnaJ of Azoarcus sp. (strain BH72).